The primary structure comprises 628 residues: Siderophore iron transporter 1 (628 aa).

The next 14 membrane-spanning stretches (helical) occupy residues 68–88 (IYRVALFFSLFLIAYAYGLDG), 107–127 (LLSTVNCIKTVIAAVGQIFFA), 132–152 (IFGRFSIMIVSIIFYSMGTII), 164–184 (VGGCFYQLGLTGIILILEVIA), 194–214 (LLALFIPALPFIINTWISGNV), 225–245 (GIGMWAFILPLACIPLGICML), 285–305 (IIGMLLITVFFGCVLVPFTLA), 317–337 (IIVPEVIGWVVVLPLYMLWEI), 354–374 (GIFFALLIAFFINFNWYMQGD), 394–414 (ITSLYSFVSVIVGTILGFILI), 420–440 (KPFIIFGISCWIVSFGLLVHY), 448–468 (SGIIGSLCLLGFGAGSFTYVT), 488–508 (LYLATYNIGSAFGSSVSGAVW), and 559–579 (KILCIIGLVFCFPLLGCAFML).

Belongs to the major facilitator superfamily.

It is found in the endosome membrane. Its function is as follows. Involved in the transport of siderophore ferrioxamine B and so has a role in iron homeostasis. This is Siderophore iron transporter 1 (SIT1) from Saccharomyces cerevisiae (strain ATCC 204508 / S288c) (Baker's yeast).